A 344-amino-acid polypeptide reads, in one-letter code: Flavonoid 7-O-methyltransferase 1B (344 aa).

D211 is an S-adenosyl-L-methionine binding site. The active-site Proton acceptor is the H249.

The protein belongs to the class I-like SAM-binding methyltransferase superfamily. Cation-independent O-methyltransferase family. Homodimer.

The enzyme catalyses scutellarein + S-adenosyl-L-methionine = scutellarein 7-methyl ether + S-adenosyl-L-homocysteine. It catalyses the reaction 4',7,8-trihydroxyflavone + S-adenosyl-L-methionine = 4',8-dihydroxy-7-methoxyflavone + S-adenosyl-L-homocysteine. It carries out the reaction isorhamnetin + S-adenosyl-L-methionine = rhamnacene + S-adenosyl-L-homocysteine + H(+). The catalysed reaction is kaempferol + S-adenosyl-L-methionine = kaempferol 7-methyl ether + S-adenosyl-L-homocysteine + H(+). The enzyme catalyses (2S)-naringenin + S-adenosyl-L-methionine = (2S)-sakuranetin + S-adenosyl-L-homocysteine + H(+). It catalyses the reaction quercetin + S-adenosyl-L-methionine = rhamnetin + S-adenosyl-L-homocysteine + H(+). It carries out the reaction apigenin + S-adenosyl-L-methionine = genkwanin + S-adenosyl-L-homocysteine + H(+). The catalysed reaction is luteolin + S-adenosyl-L-methionine = luteolin 7-methyl ether + S-adenosyl-L-homocysteine + H(+). The protein operates within flavonoid metabolism. In terms of biological role, flavonoid 7-O-methyltransferase involved in the biosynthesis of polymethoxylated flavonoids natural products such as pebrellin, aroma compounds which contribute to the flavor of peppermint, and exhibit pharmacological activities such as anti-allergic, anti-oxidant, antibacterial, anti-proliferative, and anti-inflammatory effects. Catalyzes S-adenosylmethionine-dependent regioselective 7-O-methylation of flavonoids; active on various hydroxylated flavonoid substrates, including luteolin (LUT), quercetin, kaempferol, isorhamnetin, apigenin (API), scutellarein (6-hydroxy-apigenin, 6-OH-API, SCU), 7,8,4'-trihydroxy-flavone and naringenin (NAR), and, with a lower efficiency, 7,8,3',4'-tetrahydroxy-flavone, taxifolin and hesperetin. The polypeptide is Flavonoid 7-O-methyltransferase 1B (Mentha piperita (Peppermint)).